The sequence spans 334 residues: Spermatogenesis-associated protein 32 (334 aa).

The interval 24 to 98 (SDHHRHHHHH…TESPEQQNYR (75 aa)) is disordered. Acidic residues predominate over residues 37 to 47 (ENEDEDTEVEA). Residues 48–60 (ELPRTEPPPKVDP) are compositionally biased toward basic and acidic residues. The segment covering 77–98 (SKTTPETEGDSYTESPEQQNYR) has biased composition (polar residues). S135 and S138 each carry phosphoserine.

As to quaternary structure, interacts with syntaxin-1 and ACTB. As to expression, highly expressed in the testis and weakly in the brain and heart.

The sequence is that of Spermatogenesis-associated protein 32 (Spata32) from Mus musculus (Mouse).